We begin with the raw amino-acid sequence, 541 residues long: Light-independent protochlorophyllide reductase subunit B (541 aa).

Aspartate 36 contributes to the [4Fe-4S] cluster binding site. Catalysis depends on aspartate 286, which acts as the Proton donor. 421–422 (GM) is a substrate binding site.

Belongs to the ChlB/BchB/BchZ family. In terms of assembly, protochlorophyllide reductase is composed of three subunits; BchL, BchN and BchB. Forms a heterotetramer of two BchB and two BchN subunits. It depends on [4Fe-4S] cluster as a cofactor.

It catalyses the reaction chlorophyllide a + oxidized 2[4Fe-4S]-[ferredoxin] + 2 ADP + 2 phosphate = protochlorophyllide a + reduced 2[4Fe-4S]-[ferredoxin] + 2 ATP + 2 H2O. It participates in porphyrin-containing compound metabolism; bacteriochlorophyll biosynthesis (light-independent). Functionally, component of the dark-operative protochlorophyllide reductase (DPOR) that uses Mg-ATP and reduced ferredoxin to reduce ring D of protochlorophyllide (Pchlide) to form chlorophyllide a (Chlide). This reaction is light-independent. The NB-protein (BchN-BchB) is the catalytic component of the complex. This is Light-independent protochlorophyllide reductase subunit B from Chloroflexus aurantiacus (strain ATCC 29364 / DSM 637 / Y-400-fl).